The primary structure comprises 141 residues: Large ribosomal subunit protein uL11 (141 aa).

Belongs to the universal ribosomal protein uL11 family. Part of the ribosomal stalk of the 50S ribosomal subunit. Interacts with L10 and the large rRNA to form the base of the stalk. L10 forms an elongated spine to which L12 dimers bind in a sequential fashion forming a multimeric L10(L12)X complex. One or more lysine residues are methylated.

In terms of biological role, forms part of the ribosomal stalk which helps the ribosome interact with GTP-bound translation factors. The sequence is that of Large ribosomal subunit protein uL11 from Moorella thermoacetica (strain ATCC 39073 / JCM 9320).